The sequence spans 90 residues: UPF0298 protein SSU05_1549 (90 aa).

It belongs to the UPF0298 family.

It is found in the cytoplasm. This Streptococcus suis (strain 05ZYH33) protein is UPF0298 protein SSU05_1549.